The chain runs to 558 residues: Glucose-6-phosphate isomerase (558 aa).

The active-site Proton donor is the glutamate 363. Residues histidine 394 and lysine 522 contribute to the active site.

This sequence belongs to the GPI family.

It localises to the cytoplasm. It catalyses the reaction alpha-D-glucose 6-phosphate = beta-D-fructose 6-phosphate. Its pathway is carbohydrate biosynthesis; gluconeogenesis. It participates in carbohydrate degradation; glycolysis; D-glyceraldehyde 3-phosphate and glycerone phosphate from D-glucose: step 2/4. In terms of biological role, catalyzes the reversible isomerization of glucose-6-phosphate to fructose-6-phosphate. The protein is Glucose-6-phosphate isomerase of Blochmanniella floridana.